The following is a 201-amino-acid chain: FMN-dependent NADH:quinone oxidoreductase (201 aa).

FMN is bound by residues serine 9, 16–18, and 93–96; these read SVS and MYNF.

Belongs to the azoreductase type 1 family. Homodimer. The cofactor is FMN.

It catalyses the reaction 2 a quinone + NADH + H(+) = 2 a 1,4-benzosemiquinone + NAD(+). The enzyme catalyses N,N-dimethyl-1,4-phenylenediamine + anthranilate + 2 NAD(+) = 2-(4-dimethylaminophenyl)diazenylbenzoate + 2 NADH + 2 H(+). Quinone reductase that provides resistance to thiol-specific stress caused by electrophilic quinones. Functionally, also exhibits azoreductase activity. Catalyzes the reductive cleavage of the azo bond in aromatic azo compounds to the corresponding amines. The polypeptide is FMN-dependent NADH:quinone oxidoreductase (Gluconacetobacter diazotrophicus (strain ATCC 49037 / DSM 5601 / CCUG 37298 / CIP 103539 / LMG 7603 / PAl5)).